We begin with the raw amino-acid sequence, 153 residues long: Nuclear cap-binding protein subunit 2 (153 aa).

MRNA-binding positions include Tyr-17, Tyr-40, Arg-109–Asp-113, Arg-120–Arg-124, and Gln-130–Val-131. An RRM domain is found at Cys-37–Gly-115.

This sequence belongs to the RRM NCBP2 family. Component of the nuclear cap-binding complex (CBC), a heterodimer composed of ncbp1/cbp80 and ncbp2/cbp20 that interacts with m7GpppG-capped RNA.

The protein resides in the nucleus. Its subcellular location is the cytoplasm. In terms of biological role, component of the cap-binding complex (CBC), which binds co-transcriptionally to the 5' cap of pre-mRNAs and is involved in various processes such as pre-mRNA splicing, translation regulation, nonsense-mediated mRNA decay, RNA-mediated gene silencing (RNAi) by microRNAs (miRNAs) and mRNA export. The CBC complex is involved in mRNA export from the nucleus, leading to the recruitment of the mRNA export machinery to the 5' end of mRNA and to mRNA export in a 5' to 3' direction through the nuclear pore. The CBC complex is also involved in mediating U snRNA and intronless mRNAs export from the nucleus. The CBC complex is essential for a pioneer round of mRNA translation, before steady state translation when the CBC complex is replaced by cytoplasmic cap-binding protein eIF4E. The pioneer round of mRNA translation mediated by the CBC complex plays a central role in nonsense-mediated mRNA decay (NMD), NMD only taking place in mRNAs bound to the CBC complex, but not on eIF4E-bound mRNAs. The CBC complex enhances NMD in mRNAs containing at least one exon-junction complex (EJC), promoting the interaction between upf1 and upf2. The CBC complex is also involved in 'failsafe' NMD, which is independent of the EJC complex, while it does not participate in Staufen-mediated mRNA decay (SMD). During cell proliferation, the CBC complex is also involved in microRNAs (miRNAs) biogenesis via its interaction with srrt/ars2, thereby being required for miRNA-mediated RNA interference. The CBC complex also acts as a negative regulator of parn, thereby acting as an inhibitor of mRNA deadenylation. In the CBC complex, ncbp2/cbp20 recognizes and binds capped RNAs (m7GpppG-capped RNA) but requires ncbp1/cbp80 to stabilize the movement of its N-terminal loop and lock the CBC into a high affinity cap-binding state with the cap structure. The conventional cap-binding complex with NCBP2 binds both small nuclear RNA (snRNA) and messenger (mRNA) and is involved in their export from the nucleus. The protein is Nuclear cap-binding protein subunit 2 (ncbp2) of Xenopus laevis (African clawed frog).